The sequence spans 321 residues: Probable membrane-associated kinase regulator 3 (321 aa).

The span at 297 to 314 shows a compositional bias: polar residues; sequence KSNVTESELCSSRTSVST. The interval 297 to 321 is disordered; the sequence is KSNVTESELCSSRTSVSTCGDLDKD.

Its subcellular location is the cell membrane. This chain is Probable membrane-associated kinase regulator 3 (MAKR3), found in Arabidopsis thaliana (Mouse-ear cress).